Here is a 512-residue protein sequence, read N- to C-terminus: D-alanine--D-alanyl carrier protein ligase (512 aa).

152–153 (TS) is an ATP binding site. Residue Asp199 coordinates D-alanine. Residue 294–299 (NAYGPT) participates in ATP binding. Val303 lines the D-alanine pocket. Residues Asp385, 397-400 (YGGR), and Lys499 each bind ATP. Lys499 is a D-alanine binding site.

This sequence belongs to the ATP-dependent AMP-binding enzyme family. DltA subfamily.

It is found in the cytoplasm. The enzyme catalyses holo-[D-alanyl-carrier protein] + D-alanine + ATP = D-alanyl-[D-alanyl-carrier protein] + AMP + diphosphate. The protein operates within cell wall biogenesis; lipoteichoic acid biosynthesis. In terms of biological role, catalyzes the first step in the D-alanylation of lipoteichoic acid (LTA), the activation of D-alanine and its transfer onto the D-alanyl carrier protein (Dcp) DltC. In an ATP-dependent two-step reaction, forms a high energy D-alanyl-AMP intermediate, followed by transfer of the D-alanyl residue as a thiol ester to the phosphopantheinyl prosthetic group of the Dcp. D-alanylation of LTA plays an important role in modulating the properties of the cell wall in Gram-positive bacteria, influencing the net charge of the cell wall. This chain is D-alanine--D-alanyl carrier protein ligase, found in Streptococcus pyogenes serotype M28 (strain MGAS6180).